We begin with the raw amino-acid sequence, 641 residues long: RING finger containing E3 ubiquitin-protein ligase WSV403 (641 aa).

An RING-type; atypical zinc finger spans residues cysteine 329–phenylalanine 371.

It catalyses the reaction S-ubiquitinyl-[E2 ubiquitin-conjugating enzyme]-L-cysteine + [acceptor protein]-L-lysine = [E2 ubiquitin-conjugating enzyme]-L-cysteine + N(6)-ubiquitinyl-[acceptor protein]-L-lysine.. The protein operates within protein modification; protein ubiquitination. Its function is as follows. Probable E3 ubiquitin-protein ligase which accepts ubiquitin from an E2 ubiquitin-conjugating enzyme in the form of a thioester and then directly transfers the ubiquitin to targeted substrates. The sequence is that of RING finger containing E3 ubiquitin-protein ligase WSV403 from White spot syndrome virus (isolate Shrimp/China/Tongan/1996) (WSSV).